A 750-amino-acid polypeptide reads, in one-letter code: MEQTYQYAWIIPFLPLPVPMLIGVGLLLFPTATKNLRRMWAFTSILLLSIVMIFATNLSIQQINTSSIYQYVWSWTLDNDFSLEFGYLIDPLTSIMSMLITTVGIMVLIYSDNYMAHDQGYLRFFAYMSFFSTSMFGLVTSSNLIQIYIFWELVGMCSYLLIGFWFTRPPAANACQKAFVTNRVGDFGLLLGILGFYWITGSFEFRDLFQIFNNLISNNEVNSPFVTLCAALLFAGAVAKSAQFPLHIWLPDAMEGPTPISALIHAATMVAAGIFLVARLLTLFIVIPYILNIISLIGLITVLLGATLALAQKDIKRGLAYSTMSQLGYMILALGIGSYRSALFHLITHAYSKALLFLGSGSVIHSMETIVGYSPDKSQNMVLMGGLTKHVPITKTSFLLGTLSLSGIPPLACFWSKDEILNDSWLYSPIFAIIAWATAGLTAFYMFRIYLLTFEGHLNCHFQNYSGSQNTSLYSISLWGSTCSQRINKNFHLLRMNNNESSSFFSKKTYRSDQTLRKTNRGRPFINIVHFDTKKPFSYPYESDNTMLFPLLVLVLFTLFVGSIGIPFNQEGTDLDILSKWLAPSINLLHQKSKDSTDWYEFLKDAIFSVSIAYFGIFLASFLYKPIYSSLKNFDFINFFVKTGPKRYRWDKILTVLYDWSYNRAYIDPFYTTCFTGAIRGLAQLTYFFDRRVIDGITNGVGIMSFFLGEGIKYASGGRISSYLFFYFCCVSIFLVIYYKFYLFSLYIPF.

A run of 16 helical transmembrane segments spans residues tryptophan 9–phenylalanine 29, tryptophan 40–isoleucine 60, isoleucine 89–isoleucine 109, phenylalanine 125–isoleucine 145, isoleucine 147–threonine 167, glycine 185–phenylalanine 205, alanine 230–leucine 250, threonine 258–alanine 278, leucine 283–leucine 303, leucine 327–isoleucine 347, alanine 354–serine 374, threonine 396–serine 416, tryptophan 425–tyrosine 445, leucine 548–phenylalanine 568, isoleucine 607–isoleucine 627, and leucine 724–phenylalanine 744.

The protein belongs to the complex I subunit 5 family. As to quaternary structure, NDH is composed of at least 16 different subunits, 5 of which are encoded in the nucleus.

It localises to the plastid. It is found in the chloroplast thylakoid membrane. The catalysed reaction is a plastoquinone + NADH + (n+1) H(+)(in) = a plastoquinol + NAD(+) + n H(+)(out). It catalyses the reaction a plastoquinone + NADPH + (n+1) H(+)(in) = a plastoquinol + NADP(+) + n H(+)(out). Functionally, NDH shuttles electrons from NAD(P)H:plastoquinone, via FMN and iron-sulfur (Fe-S) centers, to quinones in the photosynthetic chain and possibly in a chloroplast respiratory chain. The immediate electron acceptor for the enzyme in this species is believed to be plastoquinone. Couples the redox reaction to proton translocation, and thus conserves the redox energy in a proton gradient. The polypeptide is NAD(P)H-quinone oxidoreductase subunit 5, chloroplastic (ndhF) (Tecoma stans (Yellow bells)).